Consider the following 323-residue polypeptide: 4-diphosphocytidyl-2-C-methyl-D-erythritol kinase (323 aa).

Residue lysine 25 is part of the active site. ATP is bound at residue 110–120 (PVAGGMAGGSA). Residue aspartate 152 is part of the active site.

This sequence belongs to the GHMP kinase family. IspE subfamily.

It catalyses the reaction 4-CDP-2-C-methyl-D-erythritol + ATP = 4-CDP-2-C-methyl-D-erythritol 2-phosphate + ADP + H(+). It participates in isoprenoid biosynthesis; isopentenyl diphosphate biosynthesis via DXP pathway; isopentenyl diphosphate from 1-deoxy-D-xylulose 5-phosphate: step 3/6. In terms of biological role, catalyzes the phosphorylation of the position 2 hydroxy group of 4-diphosphocytidyl-2C-methyl-D-erythritol. The polypeptide is 4-diphosphocytidyl-2-C-methyl-D-erythritol kinase (Mycobacterium leprae (strain Br4923)).